Here is a 383-residue protein sequence, read N- to C-terminus: Micronemal protein 3 (383 aa).

A signal peptide spans 1 to 26 (MRGGTSALLHALTFSGAVWMCTPAEA). A propeptide spans 27-66 (LPIQKSVQLGSFDKVVPSREVVSESLAPSFAVTETHSSVQ) (required for proper sorting to micronemes). A lectin-like; required for the binding of host cells region spans residues 67 to 145 (SPSKQETQLC…HPDKSYGGDC (79 aa)). Required for proper sorting to micronemes regions lie at residues 146–189 (SCEK…SEDP), 190–236 (CSKR…KRTG), and 237–290 (CHAF…LAEK). In terms of domain architecture, EGF-like spans 186-227 (SEDPCSKRGNAKCGPNGTCIVVDSVSYTCTCGDGETLVNLPE). Cystine bridges form between C190-C204 and C198-C214. A glycan (N-linked (GlcNAc...) asparagine) is linked at N201. Positions 294–359 (EFGISASSCK…HTVTCEKIKH (66 aa)) are involved in dimerization.

As to quaternary structure, homodimer; dimerization is likely required for host cell binding but not for trafficking to micronemes. Post-translationally, removal of the propeptide occurs in a post-medial-Golgi compartment. Removal of the propeptide is required for the host cell binding. The presence of propeptide does not affect dimerization. The presence of propeptide does not affect sorting to micronemes.

It is found in the cytoplasmic vesicle. Its subcellular location is the secretory vesicle. The protein resides in the microneme. It localises to the secreted. The protein localises to the golgi apparatus. It is found in the endoplasmic reticulum. Its function is as follows. Adhesin; can bind both the host cells and the parasites. May be involved in parasite invasion by acting as a bridge between the parasite and the host cell. Triggers innate immune responses in mouse macrophages via the TLR11/MyD88/NF-kappa-B pathway. Induces TNF/TNF-alpha secretion in mouse macrophages. Induces secretion of IL6 in mouse and human macrophages likely via different mechanisms. Up-regulates expression of NOS2/iNOS in mouse macrophages. Induces mouse macrophage polarization. This chain is Micronemal protein 3, found in Toxoplasma gondii.